The chain runs to 396 residues: Tryptophan synthase beta chain (396 aa).

An N6-(pyridoxal phosphate)lysine modification is found at Lys-86.

The protein belongs to the TrpB family. As to quaternary structure, tetramer of two alpha and two beta chains. Pyridoxal 5'-phosphate serves as cofactor.

It catalyses the reaction (1S,2R)-1-C-(indol-3-yl)glycerol 3-phosphate + L-serine = D-glyceraldehyde 3-phosphate + L-tryptophan + H2O. It functions in the pathway amino-acid biosynthesis; L-tryptophan biosynthesis; L-tryptophan from chorismate: step 5/5. Functionally, the beta subunit is responsible for the synthesis of L-tryptophan from indole and L-serine. In Erwinia tasmaniensis (strain DSM 17950 / CFBP 7177 / CIP 109463 / NCPPB 4357 / Et1/99), this protein is Tryptophan synthase beta chain.